The sequence spans 274 residues: Undecaprenyl-diphosphatase 1 (274 aa).

7 consecutive transmembrane segments (helical) span residues 8-28, 45-65, 92-112, 120-140, 195-215, 230-250, and 253-273; these read WLLIKYLLLGLFQGFTEPIPV, IEGLSFEVMVNFASLFAVIAI, FRISFYLLLATVPAVLAALLF, LKQLHVIAFALLITGMALWLI, FSFFLYIPISLGSGVLAISDI, IAFIGSFIASYVSLLWFMNIM, and GKLIYFALYCWLAGLIVLSLL.

Belongs to the UppP family.

It localises to the cell membrane. It carries out the reaction di-trans,octa-cis-undecaprenyl diphosphate + H2O = di-trans,octa-cis-undecaprenyl phosphate + phosphate + H(+). Its function is as follows. Catalyzes the dephosphorylation of undecaprenyl diphosphate (UPP). Confers resistance to bacitracin. This chain is Undecaprenyl-diphosphatase 1, found in Halalkalibacterium halodurans (strain ATCC BAA-125 / DSM 18197 / FERM 7344 / JCM 9153 / C-125) (Bacillus halodurans).